We begin with the raw amino-acid sequence, 91 residues long: Elongation factor 1-beta (91 aa).

This sequence belongs to the EF-1-beta/EF-1-delta family.

Its function is as follows. Promotes the exchange of GDP for GTP in EF-1-alpha/GDP, thus allowing the regeneration of EF-1-alpha/GTP that could then be used to form the ternary complex EF-1-alpha/GTP/AAtRNA. This is Elongation factor 1-beta from Thermococcus kodakarensis (strain ATCC BAA-918 / JCM 12380 / KOD1) (Pyrococcus kodakaraensis (strain KOD1)).